We begin with the raw amino-acid sequence, 1415 residues long: DNA-directed RNA polymerase subunit beta'' (1415 aa).

Zn(2+) is bound by residues C217, C291, C298, and C301.

This sequence belongs to the RNA polymerase beta' chain family. RpoC2 subfamily. In plastids the minimal PEP RNA polymerase catalytic core is composed of four subunits: alpha, beta, beta', and beta''. When a (nuclear-encoded) sigma factor is associated with the core the holoenzyme is formed, which can initiate transcription. The cofactor is Zn(2+).

The protein resides in the plastid. It localises to the chloroplast. The catalysed reaction is RNA(n) + a ribonucleoside 5'-triphosphate = RNA(n+1) + diphosphate. Its function is as follows. DNA-dependent RNA polymerase catalyzes the transcription of DNA into RNA using the four ribonucleoside triphosphates as substrates. The chain is DNA-directed RNA polymerase subunit beta'' from Phaeodactylum tricornutum (strain CCAP 1055/1).